The sequence spans 344 residues: Plastoglobule-localized metallopeptidase 48, chloroplastic (344 aa).

Residues 1–47 constitute a chloroplast transit peptide; it reads MAVSVSAPVLSLCYNQSGELSRSLGYRLPKKVGFSSGRRSVSYIGFG. A run of 2 helical transmembrane segments spans residues 102-122 and 169-189; these read LLGS…SVLV and FIVV…QAVL. Position 191 (histidine 191) interacts with Zn(2+). Glutamate 192 is an active-site residue. Histidine 195 provides a ligand contact to Zn(2+). A helical membrane pass occupies residues 201–221; that stretch reads GVWLTFANILTLGAYTVPAFG. Glutamate 240 contacts Zn(2+). A helical transmembrane segment spans residues 256–272; it reads VVVSVLMKLAGGCPSIA.

The protein belongs to the peptidase M48 family. M48D subfamily. As to quaternary structure, interacts with plastoglobule (PG) core proteins ABC1K3, PES1 and CCD4. The cofactor is Zn(2+). Mostly expressed in flowers (e.g. sepals, petals and stamen), seeds, leaves and cotyledons.

It localises to the plastid. Its subcellular location is the chloroplast. The protein resides in the plastoglobule. It is found in the chloroplast membrane. In terms of biological role, metalloendopeptidase with a Zn-dependent proteolytic activity and substrate cleavage upstream of hydrophobic residues. Positive regulator of senescence, probably by degrading CCD4, thus participating in the controlled removal of carotenoids from the thylakoid membrane during the senescence process. This is Plastoglobule-localized metallopeptidase 48, chloroplastic from Arabidopsis thaliana (Mouse-ear cress).